A 408-amino-acid chain; its full sequence is F-box A protein 155 (408 aa).

Residues 1 to 22 (MSDRGSDQSSSSSDSAQHIPPK) are disordered.

The protein belongs to the FTH family.

This chain is F-box A protein 155 (fbxa-155), found in Caenorhabditis elegans.